Reading from the N-terminus, the 172-residue chain is MDLKALIRDIPDFPKPGIMFRDITTLLNSPEGLRYTIDSLVEQCESQELVPDHVVGMESRGFLFGMPLAYQMNAGFIPVRKPGKLPAPVHRVEYDLEYGKDSLEIHQDAVAPHHRVLIVDDLIATGGTAKATAELLTKLGCEVLGFAFIIELAALNGRQCLPDLPIISLVEY.

This sequence belongs to the purine/pyrimidine phosphoribosyltransferase family. In terms of assembly, homodimer.

Its subcellular location is the cytoplasm. It catalyses the reaction AMP + diphosphate = 5-phospho-alpha-D-ribose 1-diphosphate + adenine. Its pathway is purine metabolism; AMP biosynthesis via salvage pathway; AMP from adenine: step 1/1. Functionally, catalyzes a salvage reaction resulting in the formation of AMP, that is energically less costly than de novo synthesis. This chain is Adenine phosphoribosyltransferase, found in Synechocystis sp. (strain ATCC 27184 / PCC 6803 / Kazusa).